A 600-amino-acid chain; its full sequence is Aspartate--tRNA(Asp/Asn) ligase (600 aa).

Position 181 (glutamate 181) interacts with L-aspartate. Residues glutamine 205 to lysine 208 form an aspartate region. Arginine 227 is an L-aspartate binding site. ATP is bound by residues arginine 227 to glutamate 229 and glutamine 236. Histidine 455 contributes to the L-aspartate binding site. Residue glutamate 490 participates in ATP binding. Arginine 497 provides a ligand contact to L-aspartate. An ATP-binding site is contributed by glycine 542–arginine 545.

This sequence belongs to the class-II aminoacyl-tRNA synthetase family. Type 1 subfamily. In terms of assembly, homodimer.

The protein localises to the cytoplasm. The catalysed reaction is tRNA(Asx) + L-aspartate + ATP = L-aspartyl-tRNA(Asx) + AMP + diphosphate. In terms of biological role, aspartyl-tRNA synthetase with relaxed tRNA specificity since it is able to aspartylate not only its cognate tRNA(Asp) but also tRNA(Asn). Reaction proceeds in two steps: L-aspartate is first activated by ATP to form Asp-AMP and then transferred to the acceptor end of tRNA(Asp/Asn). The chain is Aspartate--tRNA(Asp/Asn) ligase from Methylacidiphilum infernorum (isolate V4) (Methylokorus infernorum (strain V4)).